We begin with the raw amino-acid sequence, 371 residues long: Neuropeptide S receptor (371 aa).

Over residues 1–21 the composition is skewed to polar residues; that stretch reads MPANFTEGSFDSSGTGQTLDS. The segment at 1 to 22 is disordered; sequence MPANFTEGSFDSSGTGQTLDSS. Over 1–52 the chain is Extracellular; sequence MPANFTEGSFDSSGTGQTLDSSPVACTETVTFTEVVEGKEWGSFYYSFKTEQ. N-linked (GlcNAc...) asparagine glycosylation is present at Asn4. Residues 53-73 form a helical membrane-spanning segment; sequence LITLWVLFVFTIVGNSVVLFS. Topologically, residues 74-82 are cytoplasmic; it reads TWRRKKKSR. Residues 83-103 form a helical membrane-spanning segment; that stretch reads MTFFVTQLAITDSFTGLVNIL. Over 104 to 123 the chain is Extracellular; the sequence is TDINWRFTGDFTAPDLVCRV. An intrachain disulfide couples Cys121 to Cys197. The chain crosses the membrane as a helical span at residues 124–144; the sequence is VRYLQVVLLYASTYVLVSLSI. The Cytoplasmic segment spans residues 145–164; that stretch reads DRYHAIVYPMKFLQGEKQAR. The helical transmembrane segment at 165–185 threads the bilayer; it reads VLIVIAWSLSFLFSIPTLIIF. Residues 186–212 lie on the Extracellular side of the membrane; the sequence is GKRTLSNGEVQCWALWPDDSYWTPYMT. A helical transmembrane segment spans residues 213-233; it reads IVAFLVYFIPLTIISIMYGIV. Topologically, residues 234 to 275 are cytoplasmic; that stretch reads IRTIWIKSKTYETVISNCSDGKLCSSYNRGLISKAKIKAIKY. The chain crosses the membrane as a helical span at residues 276–296; that stretch reads SIIIILAFICCWSPYFLFDIL. Over 297-312 the chain is Extracellular; that stretch reads DNFNLLPDTQERFYAS. A helical membrane pass occupies residues 313-333; the sequence is VIIQNLPALNSAINPLIYCVF. The Cytoplasmic portion of the chain corresponds to 334-371; that stretch reads SSSISFPCREQRSQDSRMTFRERTERHEMQILSKPEFI.

Belongs to the G-protein coupled receptor 1 family. Vasopressin/oxytocin receptor subfamily. In terms of tissue distribution, isoform 4 is ubiquitous; it is detected in glandular epithelia of bronchus, stomach, small intestine, colon, uterus, esophagus, spleen, kidney, pancreas, prostate and breast. Isoform 1 is detected in uterus, colon and prostate, and in the smooth muscle cell layer in bronchial and arterial walls (at protein level). Isoform 1 is predominantly expressed in smooth muscle. Isoform 4 is predominantly expressed in epithelial cells. In bronchial biopsies, it is expressed in smooth muscle cells of asthma patients, but not in control patients; whereas in epithelial cells, its expression is consistently stronger in asthma patients.

It localises to the cell membrane. Its subcellular location is the cytoplasm. G-protein coupled receptor for neuropeptide S (NPS). Promotes mobilization of intracellular Ca(2+) stores. Inhibits cell growth in response to NPS binding. Involved in pathogenesis of asthma and other IgE-mediated diseases. The sequence is that of Neuropeptide S receptor (NPSR1) from Homo sapiens (Human).